The chain runs to 224 residues: Cytidylate kinase (224 aa).

11–19 (GPAAAGKST) contacts ATP.

It belongs to the cytidylate kinase family. Type 1 subfamily.

It is found in the cytoplasm. The catalysed reaction is CMP + ATP = CDP + ADP. The enzyme catalyses dCMP + ATP = dCDP + ADP. The sequence is that of Cytidylate kinase (cmk) from Bacillus subtilis (strain 168).